The primary structure comprises 224 residues: Metalloproteinase inhibitor 4 (224 aa).

The first 29 residues, 1-29 (MPGSPRPAPSWVLLLRLLALLRPPGLGEA), serve as a signal peptide directing secretion. Cysteine 30 serves as a coordination point for Zn(2+). Involved in metalloproteinase-binding regions lie at residues 30 to 33 (CSCA) and 99 to 100 (SS). Cystine bridges form between cysteine 30-cysteine 102, cysteine 32-cysteine 131, cysteine 42-cysteine 156, cysteine 158-cysteine 205, cysteine 163-cysteine 168, and cysteine 176-cysteine 197. The NTR domain maps to 30 to 156 (CSCAPAHPQQ…SLNHHYHLNC (127 aa)).

This sequence belongs to the protease inhibitor I35 (TIMP) family. In terms of tissue distribution, abundant in heart and present at low levels in many other tissues.

The protein localises to the secreted. In terms of biological role, complexes with metalloproteinases (such as collagenases) and irreversibly inactivates them by binding to their catalytic zinc cofactor. Known to act on MMP-1, MMP-2, MMP-3, MMP-7 and MMP-9. This is Metalloproteinase inhibitor 4 (TIMP4) from Homo sapiens (Human).